An 828-amino-acid chain; its full sequence is MKLSRRSFMKANAVAAAAAAAGLSVPGVARAVVGQQEAIKWDKAPCRFCGTGCGVLVGTQQGRVVACQGDPDAPVNRGLNCIKGYFLPKIMYGKDRLTQPLLRMKNGKYDKEGEFTPITWDQAFDVMEEKFKTALKEKGPESIGMFGSGQWTIWEGYAASKLFKAGFRSNNIDPNARHCMASAVVGFMRTFGMDEPMGCYDDIEQADAFVLWGANMAEMHPILWSRITNRRLSNQNVTVAVLSTYQHRSFELADNGIIFTPQSDLVILNYIANYIIQNNAINQDFFSKHVNLRKGATDIGYGLRPTHPLEKAAKNPGSDASEPMSFEDYKAFVAEYTLEKTAEMTGVPKDQLEQLAQLYADPNKKVISYWTMGFNQHTRGVWANNLVYNLHLLTGKISQPGCGPFSLTGQPSACGTAREVGTFAHRLPADMVVTNEKHRDICEKKWNIPSGTIPAKIGLHAVAQDRALKDGKLNVYWTMCTNNMQAGPNINEERMPGWRDPRNFIIVSDPYPTVSALAADLILPTAMWVEKEGAYGNAERRTQFWRQQVQAPGEAKSDLWQLVQFSRRFKTEEVWPEELLAKKPELRGKTLYEVLYATPEVSKFPVSELAEDQLNDESRELGFYLQKGLFEEYAWFGRGHGHDLAPFDDYHKARGLRWPVVNGKETQWRYSEGNDPYVKMGEGYKFYGKPDGKAVIFALPFEPAAEAPDEEYDLWLSTGRVLEHWHTGSMTRRVPELHRAFPEAVLFIHPLDAKARDLRRGDKVKVVSRRGEVISIVETRGRNRPPQGLVYMPFFDAAQLVNKLTLDATDPLSKETDFKKCAVKLEKV.

The segment at residues 1–31 (MKLSRRSFMKANAVAAAAAAAGLSVPGVARA) is a signal peptide (tat-type signal). Residues 39–95 (IKWDKAPCRFCGTGCGVLVGTQQGRVVACQGDPDAPVNRGLNCIKGYFLPKIMYGKD) form the 4Fe-4S Mo/W bis-MGD-type domain. The [4Fe-4S] cluster site is built by Cys-46, Cys-49, Cys-53, and Cys-81. Mo-bis(molybdopterin guanine dinucleotide) is bound by residues Lys-83, Gln-150, Asn-175, Cys-179, 212-219 (WGANMAEM), 243-247 (STYQH), 262-264 (QSD), Met-372, Gln-376, Asn-482, 508-509 (SD), Lys-531, Asp-558, and 718-727 (TGRVLEHWHT). Phe-794 is a substrate binding site. Mo-bis(molybdopterin guanine dinucleotide) is bound by residues Asn-802 and Lys-819.

This sequence belongs to the prokaryotic molybdopterin-containing oxidoreductase family. NasA/NapA/NarB subfamily. In terms of assembly, component of the periplasmic nitrate reductase NapAB complex composed of NapA and NapB. [4Fe-4S] cluster serves as cofactor. The cofactor is Mo-bis(molybdopterin guanine dinucleotide). Predicted to be exported by the Tat system. The position of the signal peptide cleavage has not been experimentally proven.

It is found in the periplasm. It catalyses the reaction 2 Fe(II)-[cytochrome] + nitrate + 2 H(+) = 2 Fe(III)-[cytochrome] + nitrite + H2O. Functionally, catalytic subunit of the periplasmic nitrate reductase complex NapAB. Receives electrons from NapB and catalyzes the reduction of nitrate to nitrite. In Escherichia coli O7:K1 (strain IAI39 / ExPEC), this protein is Periplasmic nitrate reductase.